A 110-amino-acid polypeptide reads, in one-letter code: uncharacterized protein (110 aa).

Disordered stretches follow at residues 1 to 41 (MEWG…ERAQ) and 65 to 110 (LRQL…ASES). A coiled-coil region spans residues 38-68 (ERAQQLLDAVEQRQRQLLDTIAACEEMLRQL).

This is an uncharacterized protein from Mus musculus (Mouse).